The sequence spans 188 residues: Photosystem I assembly protein Ycf4 (188 aa).

Transmembrane regions (helical) follow at residues 26 to 46 and 68 to 88; these read YFWA…GLSS and LVMG…WFVI.

Belongs to the Ycf4 family.

It localises to the cellular thylakoid membrane. Its function is as follows. Seems to be required for the assembly of the photosystem I complex. This Synechococcus sp. (strain ATCC 27144 / PCC 6301 / SAUG 1402/1) (Anacystis nidulans) protein is Photosystem I assembly protein Ycf4.